The sequence spans 220 residues: Phosphatidylserine decarboxylase proenzyme (220 aa).

Catalysis depends on serine 188, which acts as the Schiff-base intermediate with substrate; via pyruvic acid. At serine 188 the chain carries Pyruvic acid (Ser); by autocatalysis.

It belongs to the phosphatidylserine decarboxylase family. PSD-A subfamily. In terms of assembly, heterodimer of a large membrane-associated beta subunit and a small pyruvoyl-containing alpha subunit. Pyruvate is required as a cofactor. Is synthesized initially as an inactive proenzyme. Formation of the active enzyme involves a self-maturation process in which the active site pyruvoyl group is generated from an internal serine residue via an autocatalytic post-translational modification. Two non-identical subunits are generated from the proenzyme in this reaction, and the pyruvate is formed at the N-terminus of the alpha chain, which is derived from the carboxyl end of the proenzyme. The post-translation cleavage follows an unusual pathway, termed non-hydrolytic serinolysis, in which the side chain hydroxyl group of the serine supplies its oxygen atom to form the C-terminus of the beta chain, while the remainder of the serine residue undergoes an oxidative deamination to produce ammonia and the pyruvoyl prosthetic group on the alpha chain.

It is found in the cell membrane. It catalyses the reaction a 1,2-diacyl-sn-glycero-3-phospho-L-serine + H(+) = a 1,2-diacyl-sn-glycero-3-phosphoethanolamine + CO2. It functions in the pathway phospholipid metabolism; phosphatidylethanolamine biosynthesis; phosphatidylethanolamine from CDP-diacylglycerol: step 2/2. In terms of biological role, catalyzes the formation of phosphatidylethanolamine (PtdEtn) from phosphatidylserine (PtdSer). The sequence is that of Phosphatidylserine decarboxylase proenzyme from Parabacteroides distasonis (strain ATCC 8503 / DSM 20701 / CIP 104284 / JCM 5825 / NCTC 11152).